Here is a 145-residue protein sequence, read N- to C-terminus: Deoxyuridine 5'-triphosphate nucleotidohydrolase (145 aa).

Residues 62–64, asparagine 75, and 79–81 contribute to the substrate site; these read RSG and TVD.

Belongs to the dUTPase family. The cofactor is Mg(2+).

The catalysed reaction is dUTP + H2O = dUMP + diphosphate + H(+). It functions in the pathway pyrimidine metabolism; dUMP biosynthesis; dUMP from dCTP (dUTP route): step 2/2. This enzyme is involved in nucleotide metabolism: it produces dUMP, the immediate precursor of thymidine nucleotides and it decreases the intracellular concentration of dUTP so that uracil cannot be incorporated into DNA. In Gloeothece citriformis (strain PCC 7424) (Cyanothece sp. (strain PCC 7424)), this protein is Deoxyuridine 5'-triphosphate nucleotidohydrolase.